A 232-amino-acid chain; its full sequence is 5'-methylthioadenosine/S-adenosylhomocysteine nucleosidase (232 aa).

Catalysis depends on Glu-12, which acts as the Proton acceptor. Residues Gly-78, Ile-152, and 173–174 contribute to the substrate site; that span reads ME. Asp-197 functions as the Proton donor in the catalytic mechanism.

The protein belongs to the PNP/UDP phosphorylase family. MtnN subfamily. Homodimer.

The enzyme catalyses S-adenosyl-L-homocysteine + H2O = S-(5-deoxy-D-ribos-5-yl)-L-homocysteine + adenine. It carries out the reaction S-methyl-5'-thioadenosine + H2O = 5-(methylsulfanyl)-D-ribose + adenine. It catalyses the reaction 5'-deoxyadenosine + H2O = 5-deoxy-D-ribose + adenine. It participates in amino-acid biosynthesis; L-methionine biosynthesis via salvage pathway; S-methyl-5-thio-alpha-D-ribose 1-phosphate from S-methyl-5'-thioadenosine (hydrolase route): step 1/2. In terms of biological role, catalyzes the irreversible cleavage of the glycosidic bond in both 5'-methylthioadenosine (MTA) and S-adenosylhomocysteine (SAH/AdoHcy) to adenine and the corresponding thioribose, 5'-methylthioribose and S-ribosylhomocysteine, respectively. Also cleaves 5'-deoxyadenosine, a toxic by-product of radical S-adenosylmethionine (SAM) enzymes, into 5-deoxyribose and adenine. Thus, is required for in vivo function of the radical SAM enzymes biotin synthase and lipoic acid synthase, that are inhibited by 5'-deoxyadenosine accumulation. The chain is 5'-methylthioadenosine/S-adenosylhomocysteine nucleosidase from Edwardsiella ictaluri (strain 93-146).